We begin with the raw amino-acid sequence, 462 residues long: MQEGKISQIIGPVVDVDFPEGRLPSILDALTVKREDGSKLVLETQQHLGEERVRTVAMESTDGLVRGMGVVNTGAAIQVPVGAEVLGRMLNVVGDPIDGRGPVNSKKTYSIHRSAPKFEDISTKAEMFETGIKVIDLLEPYSRGGKTGLFGGAGVGKTVLIMELINNIAKQQSGFSVFAGVGERTREGNDLWHEMMESGVIDKTALVFGQMNEPPGARQRVALTGLSIAEYFRDEENRDVLLFVDNIFRFTQAGSEVSALLGRMPSAVGYQPTLATEMGQLQDRIVSTKKGSVTSVQAIYVPADDLTDPAPATAFTHLDATTVLSRSIAELGIYPAVDPLDSTSRILDPNVVGDDHYNTAQAVKQLLQRYKDLQDIIAILGMDELSDEDKLVVSRARKVQRFLSQPFFVAEAFTGLAGKYVKLEDTIKGFKEIIAGKHDKLPENAFYLVGTIEEAIEKAKTL.

Residue 151–158 (GGAGVGKT) participates in ATP binding.

The protein belongs to the ATPase alpha/beta chains family. F-type ATPases have 2 components, CF(1) - the catalytic core - and CF(0) - the membrane proton channel. CF(1) has five subunits: alpha(3), beta(3), gamma(1), delta(1), epsilon(1). CF(0) has four main subunits: a(1), b(1), b'(1) and c(9-12).

It localises to the cell inner membrane. The enzyme catalyses ATP + H2O + 4 H(+)(in) = ADP + phosphate + 5 H(+)(out). Its function is as follows. Produces ATP from ADP in the presence of a proton gradient across the membrane. The catalytic sites are hosted primarily by the beta subunits. The protein is ATP synthase subunit beta of Chlorobium chlorochromatii (strain CaD3).